We begin with the raw amino-acid sequence, 525 residues long: Bifunctional purine biosynthesis protein PurH (525 aa).

Positions 1-145 (MSNVERALIS…KNNASVGIVT (145 aa)) constitute an MGS-like domain.

The protein belongs to the PurH family.

It carries out the reaction (6R)-10-formyltetrahydrofolate + 5-amino-1-(5-phospho-beta-D-ribosyl)imidazole-4-carboxamide = 5-formamido-1-(5-phospho-D-ribosyl)imidazole-4-carboxamide + (6S)-5,6,7,8-tetrahydrofolate. The catalysed reaction is IMP + H2O = 5-formamido-1-(5-phospho-D-ribosyl)imidazole-4-carboxamide. It participates in purine metabolism; IMP biosynthesis via de novo pathway; 5-formamido-1-(5-phospho-D-ribosyl)imidazole-4-carboxamide from 5-amino-1-(5-phospho-D-ribosyl)imidazole-4-carboxamide (10-formyl THF route): step 1/1. It functions in the pathway purine metabolism; IMP biosynthesis via de novo pathway; IMP from 5-formamido-1-(5-phospho-D-ribosyl)imidazole-4-carboxamide: step 1/1. The sequence is that of Bifunctional purine biosynthesis protein PurH from Alcanivorax borkumensis (strain ATCC 700651 / DSM 11573 / NCIMB 13689 / SK2).